Consider the following 133-residue polypeptide: Profilin-3 (133 aa).

This sequence belongs to the profilin family. In terms of assembly, occurs in many kinds of cells as a complex with monomeric actin in a 1:1 ratio.

The protein localises to the cytoplasm. The protein resides in the cytoskeleton. Binds to actin and affects the structure of the cytoskeleton. At high concentrations, profilin prevents the polymerization of actin, whereas it enhances it at low concentrations. By binding to PIP2, it inhibits the formation of IP3 and DG. The polypeptide is Profilin-3 (PRO3) (Nicotiana tabacum (Common tobacco)).